Consider the following 480-residue polypeptide: Phosphomethylpyrimidine synthase (480 aa).

Residues N66, M95, Y124, H159, 179–181 (SRG), 220–223 (DGLR), and E259 each bind substrate. Residue H263 coordinates Zn(2+). Position 286 (Y286) interacts with substrate. A Zn(2+)-binding site is contributed by H327. Residues C407, C410, and C415 each coordinate [4Fe-4S] cluster. The disordered stretch occupies residues 426–480 (DGDMESIEADADDRTPLEDSSAAAVNRPPVGTHDGADIPGPDADMPADTEGSADD). Positions 470–480 (MPADTEGSADD) are enriched in acidic residues.

This sequence belongs to the ThiC family. The cofactor is [4Fe-4S] cluster.

The enzyme catalyses 5-amino-1-(5-phospho-beta-D-ribosyl)imidazole + S-adenosyl-L-methionine = 4-amino-2-methyl-5-(phosphooxymethyl)pyrimidine + CO + 5'-deoxyadenosine + formate + L-methionine + 3 H(+). It functions in the pathway cofactor biosynthesis; thiamine diphosphate biosynthesis. Functionally, catalyzes the synthesis of the hydroxymethylpyrimidine phosphate (HMP-P) moiety of thiamine from aminoimidazole ribotide (AIR) in a radical S-adenosyl-L-methionine (SAM)-dependent reaction. The protein is Phosphomethylpyrimidine synthase of Haloarcula marismortui (strain ATCC 43049 / DSM 3752 / JCM 8966 / VKM B-1809) (Halobacterium marismortui).